The chain runs to 310 residues: HPr kinase/phosphorylase (310 aa).

Catalysis depends on residues His136 and Lys157. 151 to 158 (GDSGIGKS) is an ATP binding site. Ser158 serves as a coordination point for Mg(2+). The Proton acceptor; for phosphorylation activity. Proton donor; for dephosphorylation activity role is filled by Asp175. Residues 199-208 (LEIRGLGIIN) are important for the catalytic mechanism of both phosphorylation and dephosphorylation. Mg(2+) is bound at residue Glu200. The active site involves Arg241. The tract at residues 262-267 (PVRPGR) is important for the catalytic mechanism of dephosphorylation.

It belongs to the HPrK/P family. As to quaternary structure, homohexamer. The cofactor is Mg(2+).

The enzyme catalyses [HPr protein]-L-serine + ATP = [HPr protein]-O-phospho-L-serine + ADP + H(+). The catalysed reaction is [HPr protein]-O-phospho-L-serine + phosphate + H(+) = [HPr protein]-L-serine + diphosphate. Its function is as follows. Catalyzes the ATP- as well as the pyrophosphate-dependent phosphorylation of a specific serine residue in HPr, a phosphocarrier protein of the phosphoenolpyruvate-dependent sugar phosphotransferase system (PTS). HprK/P also catalyzes the pyrophosphate-producing, inorganic phosphate-dependent dephosphorylation (phosphorolysis) of seryl-phosphorylated HPr (P-Ser-HPr). The two antagonistic activities of HprK/P are regulated by several intracellular metabolites, which change their concentration in response to the absence or presence of rapidly metabolisable carbon sources (glucose, fructose, etc.) in the growth medium. Therefore, by controlling the phosphorylation state of HPr, HPrK/P is a sensor enzyme that plays a major role in the regulation of carbon metabolism and sugar transport: it mediates carbon catabolite repression (CCR), and regulates PTS-catalyzed carbohydrate uptake and inducer exclusion. The sequence is that of HPr kinase/phosphorylase from Staphylococcus epidermidis (strain ATCC 35984 / DSM 28319 / BCRC 17069 / CCUG 31568 / BM 3577 / RP62A).